The primary structure comprises 146 residues: Large ribosomal subunit protein uL15 (146 aa).

The tract at residues 1-58 is disordered; that stretch reads MNLSELRPAPGARKKPTRKGQGIGSGLGKTAGKGHKGQNARSGGGVRPGFEGGQMPLQ. Gly residues-rich tracts occupy residues 21 to 31 and 42 to 52; these read QGIGSGLGKTA and SGGGVRPGFEG.

Belongs to the universal ribosomal protein uL15 family. In terms of assembly, part of the 50S ribosomal subunit.

In terms of biological role, binds to the 23S rRNA. The polypeptide is Large ribosomal subunit protein uL15 (Desulforamulus reducens (strain ATCC BAA-1160 / DSM 100696 / MI-1) (Desulfotomaculum reducens)).